The sequence spans 146 residues: UPF0178 protein CTC_02403 (146 aa).

It belongs to the UPF0178 family.

This is UPF0178 protein CTC_02403 from Clostridium tetani (strain Massachusetts / E88).